Consider the following 487-residue polypeptide: Cysteine--tRNA ligase (487 aa).

C29 contacts Zn(2+). Residues V31–H41 carry the 'HIGH' region motif. 3 residues coordinate Zn(2+): C209, H234, and E238. Positions K266–S270 match the 'KMSKS' region motif. K269 provides a ligand contact to ATP.

This sequence belongs to the class-I aminoacyl-tRNA synthetase family. As to quaternary structure, monomer. The cofactor is Zn(2+).

Its subcellular location is the cytoplasm. The catalysed reaction is tRNA(Cys) + L-cysteine + ATP = L-cysteinyl-tRNA(Cys) + AMP + diphosphate. This is Cysteine--tRNA ligase from Persephonella marina (strain DSM 14350 / EX-H1).